The sequence spans 525 residues: Arylsulfatase G (525 aa).

The N-terminal stretch at 1–16 (MGWLFLKVLLVGMAFS) is a signal peptide. Ca(2+) is bound by residues D44, D45, and C84. C84 serves as the catalytic Nucleophile. The residue at position 84 (C84) is a 3-oxoalanine (Cys). The N-linked (GlcNAc...) asparagine glycan is linked to N117. Position 137 (K137) interacts with substrate. The active site involves H139. Substrate is bound at residue S162. N215 carries an N-linked (GlcNAc...) asparagine glycan. Residue H251 participates in substrate binding. Residues D302 and N303 each coordinate Ca(2+). 2 N-linked (GlcNAc...) asparagine glycosylation sites follow: N356 and N497.

The protein belongs to the sulfatase family. Ca(2+) serves as cofactor. In terms of processing, N-glycosylated with both high mannose and complex type sugars. The conversion to 3-oxoalanine (also known as C-formylglycine, FGly), of a serine or cysteine residue in prokaryotes and of a cysteine residue in eukaryotes, is critical for catalytic activity. Post-translationally, the 63-kDa precursor undergoes proteolytic processing in two steps, yielding two fragments in the first step (apparent molecular masses of 44 and 18 kDa). In the second step, the 44-kDa fragment is processed further to the 34- and 10-kDa chains. The 10-kDa chain is a cleavage product of the 44-kDa fragment but linked to the 18-kDa chain through a disulfide bridge. As to expression, highly expressed in the spleen, kidney, liver, brain, and testis (at protein level).

Its subcellular location is the lysosome. The catalysed reaction is an aryl sulfate + H2O = a phenol + sulfate + H(+). The enzyme catalyses Hydrolysis of the 3-sulfate groups of the N-sulfo-D-glucosamine 3-O-sulfate units of heparin.. Displays arylsulfatase activity at acidic pH towards the artificial substrate p-nitrocatechol sulfate. Catalyzes the hydrolysis of the 3-sulfate groups of the N-sulfo-D-glucosamine 3-O-sulfate units of heparin. The polypeptide is Arylsulfatase G (Arsg) (Mus musculus (Mouse)).